Here is a 271-residue protein sequence, read N- to C-terminus: MTKNQNFIETKEYKRFAEFCDACIKYQYIGICYGQPGVGKTLSSRYYTNWNTIEKQVNHRGWEDLASKTTDDILSVNKIFYTRPAEKQTRLSNDLYSISASIDLGQKLHIVNKYGHDHSKHYSDMFKYIDLIIVDEIDRLKVQHLEQLRAIYDEHNLAMIFIGMPGIEKKLSRYPQLYSRIGFAHEFDNLSKDETHHILEYKWQDLGFDLKLEDFTDYEAITTIIKITKGNFRLIHRLFAQIDRIMDINGLDKISTEVVETARDSLVIGIR.

34-41 (GQPGVGKT) lines the ATP pocket.

This Staphylococcus aureus protein is Potential ATP-binding protein.